The sequence spans 456 residues: Bifunctional protein GlmU (456 aa).

The tract at residues 1–229 (MLNSAMSVVI…ISETDGVNNR (229 aa)) is pyrophosphorylase. UDP-N-acetyl-alpha-D-glucosamine contacts are provided by residues 11-14 (LAAG), Lys-25, Gln-76, 81-82 (GT), 103-105 (YGD), Gly-140, Glu-154, Asn-169, and Asn-227. Asp-105 contacts Mg(2+). Asn-227 lines the Mg(2+) pocket. Residues 230–250 (LQLSRLERIYQAEQAEKLLLS) are linker. Residues 251-456 (GVMLRDPARF…QGWQRPVKKK (206 aa)) form an N-acetyltransferase region. Positions 333 and 351 each coordinate UDP-N-acetyl-alpha-D-glucosamine. His-363 (proton acceptor) is an active-site residue. Residues Tyr-366 and Asn-377 each contribute to the UDP-N-acetyl-alpha-D-glucosamine site. Acetyl-CoA contacts are provided by residues Ala-380, 386 to 387 (NY), Ser-405, Ala-423, and Arg-440.

The protein in the N-terminal section; belongs to the N-acetylglucosamine-1-phosphate uridyltransferase family. This sequence in the C-terminal section; belongs to the transferase hexapeptide repeat family. In terms of assembly, homotrimer. The cofactor is Mg(2+).

It is found in the cytoplasm. It catalyses the reaction alpha-D-glucosamine 1-phosphate + acetyl-CoA = N-acetyl-alpha-D-glucosamine 1-phosphate + CoA + H(+). It carries out the reaction N-acetyl-alpha-D-glucosamine 1-phosphate + UTP + H(+) = UDP-N-acetyl-alpha-D-glucosamine + diphosphate. Its pathway is nucleotide-sugar biosynthesis; UDP-N-acetyl-alpha-D-glucosamine biosynthesis; N-acetyl-alpha-D-glucosamine 1-phosphate from alpha-D-glucosamine 6-phosphate (route II): step 2/2. The protein operates within nucleotide-sugar biosynthesis; UDP-N-acetyl-alpha-D-glucosamine biosynthesis; UDP-N-acetyl-alpha-D-glucosamine from N-acetyl-alpha-D-glucosamine 1-phosphate: step 1/1. It participates in bacterial outer membrane biogenesis; LPS lipid A biosynthesis. In terms of biological role, catalyzes the last two sequential reactions in the de novo biosynthetic pathway for UDP-N-acetylglucosamine (UDP-GlcNAc). The C-terminal domain catalyzes the transfer of acetyl group from acetyl coenzyme A to glucosamine-1-phosphate (GlcN-1-P) to produce N-acetylglucosamine-1-phosphate (GlcNAc-1-P), which is converted into UDP-GlcNAc by the transfer of uridine 5-monophosphate (from uridine 5-triphosphate), a reaction catalyzed by the N-terminal domain. The protein is Bifunctional protein GlmU of Salmonella heidelberg (strain SL476).